Reading from the N-terminus, the 355-residue chain is Holliday junction branch migration complex subunit RuvB (355 aa).

Positions 4–190 are large ATPase domain (RuvB-L); the sequence is TDKLAAERII…FGIVARLEFY (187 aa). Residues Leu29, Arg30, Gly71, Lys74, Thr75, Thr76, 137 to 139, Arg180, Tyr190, and Arg227 contribute to the ATP site; that span reads EDY. Thr75 serves as a coordination point for Mg(2+). Residues 191 to 261 form a small ATPAse domain (RuvB-S) region; it reads NAEQLARIVT…VADAALKMLD (71 aa). Residues 264-355 form a head domain (RuvB-H) region; the sequence is AVGFDLMDRK…LPGLWDSAAT (92 aa). DNA-binding residues include Arg300, Arg319, and Arg324.

Belongs to the RuvB family. Homohexamer. Forms an RuvA(8)-RuvB(12)-Holliday junction (HJ) complex. HJ DNA is sandwiched between 2 RuvA tetramers; dsDNA enters through RuvA and exits via RuvB. An RuvB hexamer assembles on each DNA strand where it exits the tetramer. Each RuvB hexamer is contacted by two RuvA subunits (via domain III) on 2 adjacent RuvB subunits; this complex drives branch migration. In the full resolvosome a probable DNA-RuvA(4)-RuvB(12)-RuvC(2) complex forms which resolves the HJ.

The protein resides in the cytoplasm. It carries out the reaction ATP + H2O = ADP + phosphate + H(+). The RuvA-RuvB-RuvC complex processes Holliday junction (HJ) DNA during genetic recombination and DNA repair, while the RuvA-RuvB complex plays an important role in the rescue of blocked DNA replication forks via replication fork reversal (RFR). RuvA specifically binds to HJ cruciform DNA, conferring on it an open structure. The RuvB hexamer acts as an ATP-dependent pump, pulling dsDNA into and through the RuvAB complex. RuvB forms 2 homohexamers on either side of HJ DNA bound by 1 or 2 RuvA tetramers; 4 subunits per hexamer contact DNA at a time. Coordinated motions by a converter formed by DNA-disengaged RuvB subunits stimulates ATP hydrolysis and nucleotide exchange. Immobilization of the converter enables RuvB to convert the ATP-contained energy into a lever motion, pulling 2 nucleotides of DNA out of the RuvA tetramer per ATP hydrolyzed, thus driving DNA branch migration. The RuvB motors rotate together with the DNA substrate, which together with the progressing nucleotide cycle form the mechanistic basis for DNA recombination by continuous HJ branch migration. Branch migration allows RuvC to scan DNA until it finds its consensus sequence, where it cleaves and resolves cruciform DNA. The polypeptide is Holliday junction branch migration complex subunit RuvB (Paraburkholderia xenovorans (strain LB400)).